The chain runs to 391 residues: Elongation factor Tu (391 aa).

Residues 10 to 201 (KPHVNIGTIG…AVDDYIPTPA (192 aa)) form the tr-type G domain. The segment at 19 to 26 (GHVDHGKT) is G1. Position 19–26 (19–26 (GHVDHGKT)) interacts with GTP. Residue Thr26 participates in Mg(2+) binding. The G2 stretch occupies residues 55-59 (GITIS). Residues 76–79 (DCPG) form a G3 region. Residues 76–80 (DCPGH) and 131–134 (NKVD) contribute to the GTP site. The G4 stretch occupies residues 131–134 (NKVD). The tract at residues 169-171 (SAL) is G5.

The protein belongs to the TRAFAC class translation factor GTPase superfamily. Classic translation factor GTPase family. EF-Tu/EF-1A subfamily. Monomer.

It localises to the cytoplasm. It catalyses the reaction GTP + H2O = GDP + phosphate + H(+). Functionally, GTP hydrolase that promotes the GTP-dependent binding of aminoacyl-tRNA to the A-site of ribosomes during protein biosynthesis. The protein is Elongation factor Tu of Dinoroseobacter shibae (strain DSM 16493 / NCIMB 14021 / DFL 12).